The sequence spans 331 residues: Phosphoribosylformylglycinamidine cyclo-ligase (331 aa).

This sequence belongs to the AIR synthase family.

The protein resides in the cytoplasm. It catalyses the reaction 2-formamido-N(1)-(5-O-phospho-beta-D-ribosyl)acetamidine + ATP = 5-amino-1-(5-phospho-beta-D-ribosyl)imidazole + ADP + phosphate + H(+). The protein operates within purine metabolism; IMP biosynthesis via de novo pathway; 5-amino-1-(5-phospho-D-ribosyl)imidazole from N(2)-formyl-N(1)-(5-phospho-D-ribosyl)glycinamide: step 2/2. This is Phosphoribosylformylglycinamidine cyclo-ligase from Clostridium tetani (strain Massachusetts / E88).